Reading from the N-terminus, the 250-residue chain is F-box only protein 17 (250 aa).

One can recognise an F-box domain in the interval 15–62 (HMALAELPPELLLQVLSHVPPRALVTRCRPVCRAWRDLVDGPSVWLLQ). In terms of domain architecture, FBA spans 99–250 (FCLLAPLGRN…GLLQGLSRLH (152 aa)).

Part of a SCF (SKP1-cullin-F-box) protein ligase complex. Interacts with SKP1 and CUL1.

Functionally, substrate-recognition component of the SCF (SKP1-CUL1-F-box protein)-type E3 ubiquitin ligase complex. Able to recognize and bind denatured glycoproteins, which are modified with complex-type oligosaccharides. Also recognizes sulfated glycans. Does not bind high-mannose glycoproteins. The sequence is that of F-box only protein 17 (Fbxo17) from Rattus norvegicus (Rat).